The chain runs to 73 residues: NAD(P)H-quinone oxidoreductase subunit L (73 aa).

2 consecutive transmembrane segments (helical) span residues 7–27 (LIGL…PFLF) and 44–64 (VLMF…APFM).

It belongs to the complex I NdhL subunit family. NDH-1 can be composed of about 15 different subunits; different subcomplexes with different compositions have been identified which probably have different functions.

It is found in the cellular thylakoid membrane. It carries out the reaction a plastoquinone + NADH + (n+1) H(+)(in) = a plastoquinol + NAD(+) + n H(+)(out). The enzyme catalyses a plastoquinone + NADPH + (n+1) H(+)(in) = a plastoquinol + NADP(+) + n H(+)(out). Its function is as follows. NDH-1 shuttles electrons from an unknown electron donor, via FMN and iron-sulfur (Fe-S) centers, to quinones in the respiratory and/or the photosynthetic chain. The immediate electron acceptor for the enzyme in this species is believed to be plastoquinone. Couples the redox reaction to proton translocation, and thus conserves the redox energy in a proton gradient. Cyanobacterial NDH-1 also plays a role in inorganic carbon-concentration. This is NAD(P)H-quinone oxidoreductase subunit L from Synechococcus sp. (strain JA-3-3Ab) (Cyanobacteria bacterium Yellowstone A-Prime).